The chain runs to 602 residues: Bifunctional ribose 1,5-bisphosphokinase-thymidine phosphorylase (602 aa).

The segment at 1–187 (MKESGTFFLV…ALRNGANAGS (187 aa)) is ribose 1,5-bisphosphokinase. Positions 188-602 (VPQPASRRHL…ASTAVRVDPD (415 aa)) are thymidinephosphorylase.

This sequence in the N-terminal section; belongs to the ribose 1,5-bisphosphokinase family. The protein in the C-terminal section; belongs to the thymidine/pyrimidine-nucleoside phosphorylase family. Type 2 subfamily.

It catalyses the reaction alpha-D-ribose 1,5-bisphosphate + ATP = 5-phospho-alpha-D-ribose 1-diphosphate + ADP. The enzyme catalyses thymidine + phosphate = 2-deoxy-alpha-D-ribose 1-phosphate + thymine. Its pathway is metabolic intermediate biosynthesis; 5-phospho-alpha-D-ribose 1-diphosphate biosynthesis; 5-phospho-alpha-D-ribose 1-diphosphate from D-ribose 5-phosphate (route II): step 3/3. Functionally, catalyzes the phosphorylation of ribose 1,5-bisphosphate to 5-phospho-D-ribosyl alpha-1-diphosphate (PRPP). The polypeptide is Bifunctional ribose 1,5-bisphosphokinase-thymidine phosphorylase (phnN) (Cupriavidus pinatubonensis (strain JMP 134 / LMG 1197) (Cupriavidus necator (strain JMP 134))).